A 296-amino-acid polypeptide reads, in one-letter code: 4-hydroxy-tetrahydrodipicolinate synthase (296 aa).

A pyruvate-binding site is contributed by threonine 49. Tyrosine 137 functions as the Proton donor/acceptor in the catalytic mechanism. Lysine 166 (schiff-base intermediate with substrate) is an active-site residue. Isoleucine 208 serves as a coordination point for pyruvate.

The protein belongs to the DapA family. In terms of assembly, homotetramer; dimer of dimers.

Its subcellular location is the cytoplasm. The catalysed reaction is L-aspartate 4-semialdehyde + pyruvate = (2S,4S)-4-hydroxy-2,3,4,5-tetrahydrodipicolinate + H2O + H(+). It functions in the pathway amino-acid biosynthesis; L-lysine biosynthesis via DAP pathway; (S)-tetrahydrodipicolinate from L-aspartate: step 3/4. Its function is as follows. Catalyzes the condensation of (S)-aspartate-beta-semialdehyde [(S)-ASA] and pyruvate to 4-hydroxy-tetrahydrodipicolinate (HTPA). The protein is 4-hydroxy-tetrahydrodipicolinate synthase of Chlorobium limicola (strain DSM 245 / NBRC 103803 / 6330).